The following is a 237-amino-acid chain: MAKSKYEYVKQFESHDTLLPQCYIVVRIDGKKFHEFSKYYDFKKPNDERALKLMNACAKNVVLQYRHEMILAYGESDEYSFVLKKDTELYKRRRDKLSTLIVSLFTSNYVALWSKFFPGTNLHPKHLPFFDSRCVIYPNLETIRDYVTWRYVDTHINNLYNTAFWQLIQKCGMNPQEAEKRLSGTVSSEKNEILFKECGINYNNEPEMYKKGSLITNKGEILHINVIDSLDSLFEGY.

Positions 29, 30, and 77 each coordinate Mg(2+). GTP-binding positions include Asp29–His34 and Ser76–Asp77.

Belongs to the tRNA(His) guanylyltransferase family. The cofactor is Mg(2+).

It catalyses the reaction a 5'-end ribonucleotide-tRNA(His) + GTP + ATP + H2O = a 5'-end phospho-guanosine-ribonucleotide-tRNA(His) + AMP + 2 diphosphate + H(+). Its function is as follows. Adds a GMP to the 5'-end of tRNA(His) after transcription and RNase P cleavage. This is tRNA(His) guanylyltransferase (THG1) from Candida glabrata (strain ATCC 2001 / BCRC 20586 / JCM 3761 / NBRC 0622 / NRRL Y-65 / CBS 138) (Yeast).